A 224-amino-acid chain; its full sequence is Casparian strip membrane protein 1 (224 aa).

The interval 1-22 is disordered; the sequence is MSSGEPAAVSIPIHDHHGKAPA. At 1 to 62 the chain is on the cytoplasmic side; it reads MSSGEPAAVS…RGDHHRGSRC (62 aa). A helical membrane pass occupies residues 63-83; the sequence is LAFLDFILRIAAFGPALAAAI. Over 84–110 the chain is Extracellular; that stretch reads STGTSDETLSVFTEFYQFRARFDDFPA. Residues 111–131 form a helical membrane-spanning segment; it reads FLFFLVANAIVAGYLVLSLPF. Topologically, residues 132-145 are cytoplasmic; that stretch reads SAVLVIRPQTIGLR. The helical transmembrane segment at 146-166 threads the bilayer; the sequence is LLLLVCDMIMAAMLTAAASAA. Over 167–200 the chain is Extracellular; the sequence is AAIVDLAHNGNLRANWVAICMQFHGFCQRTSGSV. A helical membrane pass occupies residues 201 to 221; sequence VASFLTVVILMFLVILAACSI. Over 222-224 the chain is Cytoplasmic; sequence RKR.

The protein belongs to the Casparian strip membrane proteins (CASP) family. As to quaternary structure, homodimer and heterodimers.

The protein resides in the cell membrane. Its function is as follows. Regulates membrane-cell wall junctions and localized cell wall deposition. Required for establishment of the Casparian strip membrane domain (CSD) and the subsequent formation of Casparian strips, a cell wall modification of the root endodermis that determines an apoplastic barrier between the intraorganismal apoplasm and the extraorganismal apoplasm and prevents lateral diffusion. The chain is Casparian strip membrane protein 1 from Oryza sativa subsp. indica (Rice).